We begin with the raw amino-acid sequence, 426 residues long: Tol-Pal system protein TolB (426 aa).

Positions 1-25 (MSITPSLSRRTVMSLLAAGLSPAFA) are cleaved as a signal peptide.

It belongs to the TolB family. As to quaternary structure, the Tol-Pal system is composed of five core proteins: the inner membrane proteins TolA, TolQ and TolR, the periplasmic protein TolB and the outer membrane protein Pal. They form a network linking the inner and outer membranes and the peptidoglycan layer.

It is found in the periplasm. Part of the Tol-Pal system, which plays a role in outer membrane invagination during cell division and is important for maintaining outer membrane integrity. This chain is Tol-Pal system protein TolB, found in Polaromonas sp. (strain JS666 / ATCC BAA-500).